We begin with the raw amino-acid sequence, 292 residues long: Cyclin-dependent kinase 5 (292 aa).

In terms of domain architecture, Protein kinase spans 4–286; it reads YEKLEKIGEG…AEEALQHPYF (283 aa). ATP-binding positions include 10-18 and lysine 33; that span reads IGEGTYGTV. Phosphotyrosine; by ABL1, EPHA4 and FYN is present on tyrosine 15. Threonine 17 carries the phosphothreonine modification. Lysine 56 bears the N6-acetyllysine mark. Residue serine 72 is modified to Phosphoserine. The active-site Proton acceptor is aspartate 126. A Phosphoserine modification is found at serine 159.

The protein belongs to the protein kinase superfamily. CMGC Ser/Thr protein kinase family. CDC2/CDKX subfamily. In terms of assembly, heterodimer composed of a catalytic subunit CDK5 and a regulatory subunit CDK5R1 (p25) and macromolecular complex composed of at least CDK5, CDK5R1 (p35) and CDK5RAP1 or CDK5RAP2 or CDK5RAP3. Only the heterodimer shows kinase activity. Under neurotoxic stress and neuronal injury conditions, p35 is cleaved by calpain to generate p25 that hyperactivates CDK5, that becomes functionally disabled and often toxic. Found in a trimolecular complex with CABLES1 and ABL1. Interacts with CABLES1 and CABLES2. Interacts with AATK and GSTP1. Binds to HDAC1 when in complex with p25. Interaction with myristoylation p35 promotes CDK5 association with membranes. Both isoforms 1 and 2 interacts with beta-catenin/CTNNB1. Interacts with delta-catenin/CTNND2 and APEX1. Interacts with P53/TP53 in neurons. Interacts with EPHA4; may mediate the activation of NGEF by EPHA4. Interacts with PTK2/FAK1. The complex p35/CDK5 interacts with CLOCK. In terms of processing, phosphorylation on Tyr-15 by ABL1 and FYN, and on Ser-159 by casein kinase 1 promotes kinase activity. By contrast, phosphorylation at Thr-14 inhibits activity. Post-translationally, phosphorylation at Ser-159 is essential for maximal catalytic activity.

It is found in the nucleus. The protein resides in the cytoplasm. It localises to the cell membrane. Its subcellular location is the perikaryon. The protein localises to the cell projection. It is found in the lamellipodium. The protein resides in the growth cone. It localises to the postsynaptic density. Its subcellular location is the synapse. It catalyses the reaction L-seryl-[protein] + ATP = O-phospho-L-seryl-[protein] + ADP + H(+). The enzyme catalyses L-threonyl-[protein] + ATP = O-phospho-L-threonyl-[protein] + ADP + H(+). Its activity is regulated as follows. Inhibited by 2-(1-ethyl-2-hydroxyethylamino)-6-benzylamino-9-isopropylpurine (roscovitine), 1-isopropyl-4-aminobenzyl-6-ether-linked benzimidazoles, resveratrol, AT-7519 and olomoucine. Activated by CDK5R1 (p35) and CDK5R2 (p39) during the development of the nervous system; degradation of CDK5R1 (p35) and CDK5R2 (p39) by proteasome result in down regulation of kinase activity, during this process, CDK5 phosphorylates p35 and induces its ubiquitination and subsequent degradation. Kinase activity is mainly determined by the amount of p35 available and subcellular location; reversible association to plasma membrane inhibits activity. Long-term inactivation as well as CDK5R1 (p25)-mediated hyperactivation of CDK5 triggers cell death. The pro-death activity of hyperactivated CDK5 is suppressed by membrane association of CDK5, via myristoylation of p35. Brain-derived neurotrophic factor, glial-derived neurotrophic factor, nerve growth factor (NGF), retinoic acid, laminin and neuregulin promote activity. Neurotoxicity enhances nuclear activity, thus leading to MEF2 phosphorylation and inhibition prior to apoptosis of cortical neurons. Repression by GSTP1 via p25/p35 translocation prevents neurodegeneration. In terms of biological role, proline-directed serine/threonine-protein kinase essential for neuronal cell cycle arrest and differentiation and may be involved in apoptotic cell death in neuronal diseases by triggering abortive cell cycle re-entry. Interacts with D1 and D3-type G1 cyclins. Phosphorylates SRC, NOS3, VIM/vimentin, p35/CDK5R1, MEF2A, SIPA1L1, SH3GLB1, PXN, PAK1, MCAM/MUC18, SEPT5, SYN1, DNM1, AMPH, SYNJ1, CDK16, RAC1, RHOA, CDC42, TONEBP/NFAT5, MAPT/TAU, MAP1B, histone H1, p53/TP53, HDAC1, APEX1, PTK2/FAK1, huntingtin/HTT, ATM, MAP2, NEFH and NEFM. Regulates several neuronal development and physiological processes including neuronal survival, migration and differentiation, axonal and neurite growth, synaptogenesis, oligodendrocyte differentiation, synaptic plasticity and neurotransmission, by phosphorylating key proteins. Negatively regulates the CACNA1B/CAV2.2 -mediated Ca(2+) release probability at hippocampal neuronal soma and synaptic terminals. Activated by interaction with CDK5R1 (p35) and CDK5R2 (p39), especially in postmitotic neurons, and promotes CDK5R1 (p35) expression in an autostimulation loop. Phosphorylates many downstream substrates such as Rho and Ras family small GTPases (e.g. PAK1, RAC1, RHOA, CDC42) or microtubule-binding proteins (e.g. MAPT/TAU, MAP2, MAP1B), and modulates actin dynamics to regulate neurite growth and/or spine morphogenesis. Also phosphorylates exocytosis associated proteins such as MCAM/MUC18, SEPT5, SYN1, and CDK16/PCTAIRE1 as well as endocytosis associated proteins such as DNM1, AMPH and SYNJ1 at synaptic terminals. In the mature central nervous system (CNS), regulates neurotransmitter movements by phosphorylating substrates associated with neurotransmitter release and synapse plasticity; synaptic vesicle exocytosis, vesicles fusion with the presynaptic membrane, and endocytosis. Promotes cell survival by activating anti-apoptotic proteins BCL2 and STAT3, and negatively regulating of JNK3/MAPK10 activity. Phosphorylation of p53/TP53 in response to genotoxic and oxidative stresses enhances its stabilization by preventing ubiquitin ligase-mediated proteasomal degradation, and induces transactivation of p53/TP53 target genes, thus regulating apoptosis. Phosphorylation of p35/CDK5R1 enhances its stabilization by preventing calpain-mediated proteolysis producing p25/CDK5R1 and avoiding ubiquitin ligase-mediated proteasomal degradation. During aberrant cell-cycle activity and DNA damage, p25/CDK5 activity elicits cell-cycle activity and double-strand DNA breaks that precedes neuronal death by deregulating HDAC1. DNA damage triggered phosphorylation of huntingtin/HTT in nuclei of neurons protects neurons against polyglutamine expansion as well as DNA damage mediated toxicity. Phosphorylation of PXN reduces its interaction with PTK2/FAK1 in matrix-cell focal adhesions (MCFA) during oligodendrocytes (OLs) differentiation. Negative regulator of Wnt/beta-catenin signaling pathway. Activator of the GAIT (IFN-gamma-activated inhibitor of translation) pathway, which suppresses expression of a post-transcriptional regulon of proinflammatory genes in myeloid cells; phosphorylates the linker domain of glutamyl-prolyl tRNA synthetase (EPRS) in a IFN-gamma-dependent manner, the initial event in assembly of the GAIT complex. Phosphorylation of SH3GLB1 is required for autophagy induction in starved neurons. Phosphorylation of TONEBP/NFAT5 in response to osmotic stress mediates its rapid nuclear localization. MEF2 is inactivated by phosphorylation in nucleus in response to neurotoxin, thus leading to neuronal apoptosis. APEX1 AP-endodeoxyribonuclease is repressed by phosphorylation, resulting in accumulation of DNA damage and contributing to neuronal death. NOS3 phosphorylation down regulates NOS3-derived nitrite (NO) levels. SRC phosphorylation mediates its ubiquitin-dependent degradation and thus leads to cytoskeletal reorganization. May regulate endothelial cell migration and angiogenesis via the modulation of lamellipodia formation. Involved in dendritic spine morphogenesis by mediating the EFNA1-EPHA4 signaling. The complex p35/CDK5 participates in the regulation of the circadian clock by modulating the function of CLOCK protein: phosphorylates CLOCK at 'Thr-451' and 'Thr-461' and regulates the transcriptional activity of the CLOCK-BMAL1 heterodimer in association with altered stability and subcellular distribution. The sequence is that of Cyclin-dependent kinase 5 from Bos taurus (Bovine).